Reading from the N-terminus, the 469-residue chain is Probable Xaa-Pro aminopeptidase PEPP (469 aa).

D265, D276, E399, and E439 together coordinate Mn(2+).

It belongs to the peptidase M24B family. It depends on Mn(2+) as a cofactor.

The enzyme catalyses Release of any N-terminal amino acid, including proline, that is linked to proline, even from a dipeptide or tripeptide.. Catalyzes the removal of a penultimate prolyl residue from the N-termini of peptides. The polypeptide is Probable Xaa-Pro aminopeptidase PEPP (PEPP) (Coccidioides posadasii (strain C735) (Valley fever fungus)).